Reading from the N-terminus, the 868-residue chain is Protein translocase subunit SecA (868 aa).

ATP contacts are provided by residues Q85, G103 to T107, and D508.

It belongs to the SecA family. In terms of assembly, monomer and homodimer. Part of the essential Sec protein translocation apparatus which comprises SecA, SecYEG and auxiliary proteins SecDF. Other proteins may also be involved.

The protein resides in the cell membrane. It is found in the cytoplasm. The enzyme catalyses ATP + H2O + cellular proteinSide 1 = ADP + phosphate + cellular proteinSide 2.. Functionally, part of the Sec protein translocase complex. Interacts with the SecYEG preprotein conducting channel. Has a central role in coupling the hydrolysis of ATP to the transfer of proteins into and across the cell membrane, serving as an ATP-driven molecular motor driving the stepwise translocation of polypeptide chains across the membrane. The chain is Protein translocase subunit SecA from Deinococcus radiodurans (strain ATCC 13939 / DSM 20539 / JCM 16871 / CCUG 27074 / LMG 4051 / NBRC 15346 / NCIMB 9279 / VKM B-1422 / R1).